Reading from the N-terminus, the 126-residue chain is Large ribosomal subunit protein bL19 (126 aa).

The protein belongs to the bacterial ribosomal protein bL19 family.

Functionally, this protein is located at the 30S-50S ribosomal subunit interface and may play a role in the structure and function of the aminoacyl-tRNA binding site. This Paracoccus denitrificans (strain Pd 1222) protein is Large ribosomal subunit protein bL19.